A 200-amino-acid chain; its full sequence is Holliday junction branch migration complex subunit RuvA (200 aa).

Residues 1–63 are domain I; it reads MFEYLTGLIT…EDAITLFGFA (63 aa). A domain II region spans residues 64 to 142; that stretch reads TQAEKRLFTQ…AVQDEVQLDF (79 aa). The interval 143-151 is flexible linker; it reads TAPGPLGPS. The tract at residues 151–200 is domain III; the sequence is SAALQDALAALESLGYTTKQVERVQKQLEGLQGELSTNDYLSQGLKLLSR.

The protein belongs to the RuvA family. As to quaternary structure, homotetramer. Forms an RuvA(8)-RuvB(12)-Holliday junction (HJ) complex. HJ DNA is sandwiched between 2 RuvA tetramers; dsDNA enters through RuvA and exits via RuvB. An RuvB hexamer assembles on each DNA strand where it exits the tetramer. Each RuvB hexamer is contacted by two RuvA subunits (via domain III) on 2 adjacent RuvB subunits; this complex drives branch migration. In the full resolvosome a probable DNA-RuvA(4)-RuvB(12)-RuvC(2) complex forms which resolves the HJ.

It is found in the cytoplasm. In terms of biological role, the RuvA-RuvB-RuvC complex processes Holliday junction (HJ) DNA during genetic recombination and DNA repair, while the RuvA-RuvB complex plays an important role in the rescue of blocked DNA replication forks via replication fork reversal (RFR). RuvA specifically binds to HJ cruciform DNA, conferring on it an open structure. The RuvB hexamer acts as an ATP-dependent pump, pulling dsDNA into and through the RuvAB complex. HJ branch migration allows RuvC to scan DNA until it finds its consensus sequence, where it cleaves and resolves the cruciform DNA. This chain is Holliday junction branch migration complex subunit RuvA, found in Limosilactobacillus fermentum (strain NBRC 3956 / LMG 18251) (Lactobacillus fermentum).